We begin with the raw amino-acid sequence, 743 residues long: Phosphoribosylformylglycinamidine synthase subunit PurL (743 aa).

His50 is a catalytic residue. 2 residues coordinate ATP: Tyr53 and Lys92. Glu94 contacts Mg(2+). Substrate contacts are provided by residues 95-98 and Arg117; that span reads SHNH. His96 (proton acceptor) is an active-site residue. Mg(2+) is bound at residue Asp118. Residue Gln241 participates in substrate binding. Residue Asp269 coordinates Mg(2+). 313–315 contributes to the substrate binding site; the sequence is ESQ. ATP is bound by residues Asp494 and Gly531. Residue Asn532 coordinates Mg(2+). Ser534 lines the substrate pocket.

Belongs to the FGAMS family. As to quaternary structure, monomer. Part of the FGAM synthase complex composed of 1 PurL, 1 PurQ and 2 PurS subunits.

It is found in the cytoplasm. It catalyses the reaction N(2)-formyl-N(1)-(5-phospho-beta-D-ribosyl)glycinamide + L-glutamine + ATP + H2O = 2-formamido-N(1)-(5-O-phospho-beta-D-ribosyl)acetamidine + L-glutamate + ADP + phosphate + H(+). Its pathway is purine metabolism; IMP biosynthesis via de novo pathway; 5-amino-1-(5-phospho-D-ribosyl)imidazole from N(2)-formyl-N(1)-(5-phospho-D-ribosyl)glycinamide: step 1/2. Functionally, part of the phosphoribosylformylglycinamidine synthase complex involved in the purines biosynthetic pathway. Catalyzes the ATP-dependent conversion of formylglycinamide ribonucleotide (FGAR) and glutamine to yield formylglycinamidine ribonucleotide (FGAM) and glutamate. The FGAM synthase complex is composed of three subunits. PurQ produces an ammonia molecule by converting glutamine to glutamate. PurL transfers the ammonia molecule to FGAR to form FGAM in an ATP-dependent manner. PurS interacts with PurQ and PurL and is thought to assist in the transfer of the ammonia molecule from PurQ to PurL. The sequence is that of Phosphoribosylformylglycinamidine synthase subunit PurL from Sinorhizobium medicae (strain WSM419) (Ensifer medicae).